The primary structure comprises 174 residues: CASP-like protein 4D2 (174 aa).

Topologically, residues 1-14 are cytoplasmic; it reads MAPPPPSPPPVSLK. A helical transmembrane segment spans residues 15–35; sequence VSLLLLRVLTGVFLVIALIIL. Residues 36 to 60 lie on the Extracellular side of the membrane; the sequence is STNSVTIVSQGSALKFHFKDVYAYR. Residues 61 to 81 traverse the membrane as a helical segment; it reads YMLSAAVIGLLYAVIQLFFTI. At 82 to 150 the chain is on the cytoplasmic side; the sequence is SEFATGMKNP…FFSRGYASAS (69 aa). Residues 151-171 traverse the membrane as a helical segment; sequence LLLFSFICLAVLSVFSSLAIA. Residues 172-174 lie on the Extracellular side of the membrane; that stretch reads KRN.

This sequence belongs to the Casparian strip membrane proteins (CASP) family. Homodimer and heterodimers.

It localises to the cell membrane. The sequence is that of CASP-like protein 4D2 from Arabidopsis lyrata subsp. lyrata (Lyre-leaved rock-cress).